A 284-amino-acid chain; its full sequence is Bifunctional protein FolD (284 aa).

Gly166 to Ser168 provides a ligand contact to NADP(+).

Belongs to the tetrahydrofolate dehydrogenase/cyclohydrolase family. As to quaternary structure, homodimer.

It catalyses the reaction (6R)-5,10-methylene-5,6,7,8-tetrahydrofolate + NADP(+) = (6R)-5,10-methenyltetrahydrofolate + NADPH. The enzyme catalyses (6R)-5,10-methenyltetrahydrofolate + H2O = (6R)-10-formyltetrahydrofolate + H(+). It participates in one-carbon metabolism; tetrahydrofolate interconversion. Its function is as follows. Catalyzes the oxidation of 5,10-methylenetetrahydrofolate to 5,10-methenyltetrahydrofolate and then the hydrolysis of 5,10-methenyltetrahydrofolate to 10-formyltetrahydrofolate. This chain is Bifunctional protein FolD, found in Nitrosococcus oceani (strain ATCC 19707 / BCRC 17464 / JCM 30415 / NCIMB 11848 / C-107).